Reading from the N-terminus, the 324-residue chain is MAHCYYNSKRGCNRVMKTVALVVLISTVMVEESRGDSQEDKKRPIWNIGHMVNAVKQIEEFLDLGANALEADVTFDDNGNPKWTYHGTPCDCFRDCLRWEYVDEYLKRIRELTSPGSSKFRKGFILLMLDLKISKLSDNAKSKAGKEIADMIIKRLWSGSGEKAQLYIVLSFPYVNDIEFVRAFRERVKSKGFASEAEKRIGWDISGNEDLGKIRDAYQKLGITDNVWQSDGITNCLTRSHDRLAEAVCKRDSDKEWPSLKKVYYWTVDKQSSMKEALKVGVDGMITNDPDDLVAVLNEFSGTHRLANINDSPWQKIPRPKSNC.

The N-terminal stretch at 1-35 (MAHCYYNSKRGCNRVMKTVALVVLISTVMVEESRG) is a signal peptide. His-50 is an active-site residue. The Mg(2+) site is built by Glu-70 and Asp-72. His-86 acts as the Nucleophile in catalysis. 2 cysteine pairs are disulfide-bonded: Cys-90-Cys-96 and Cys-92-Cys-236. Asp-130 provides a ligand contact to Mg(2+).

It belongs to the arthropod phospholipase D family. Class II subfamily. It depends on Mg(2+) as a cofactor. As to expression, expressed by the venom gland.

It is found in the secreted. It catalyses the reaction an N-(acyl)-sphingosylphosphocholine = an N-(acyl)-sphingosyl-1,3-cyclic phosphate + choline. The enzyme catalyses an N-(acyl)-sphingosylphosphoethanolamine = an N-(acyl)-sphingosyl-1,3-cyclic phosphate + ethanolamine. It carries out the reaction a 1-acyl-sn-glycero-3-phosphocholine = a 1-acyl-sn-glycero-2,3-cyclic phosphate + choline. The catalysed reaction is a 1-acyl-sn-glycero-3-phosphoethanolamine = a 1-acyl-sn-glycero-2,3-cyclic phosphate + ethanolamine. In terms of biological role, dermonecrotic toxins cleave the phosphodiester linkage between the phosphate and headgroup of certain phospholipids (sphingolipid and lysolipid substrates), forming an alcohol (often choline) and a cyclic phosphate. This toxin acts on sphingomyelin (SM) with a high activity. It may also act on ceramide phosphoethanolamine (CPE), lysophosphatidylcholine (LPC) and lysophosphatidylethanolamine (LPE), but not on lysophosphatidylserine (LPS), and lysophosphatidylglycerol (LPG). It acts by transphosphatidylation, releasing exclusively cyclic phosphate products as second products. In vivo, shows dermonecrotic activity when intradermally injected into rabbit skin and is lethal to mice. Induces increased vascular permeability, edema, inflammatory response, and platelet aggregation. Does not show hemolytic activity (at up to 50 ug). The sequence is that of Dermonecrotic toxin Hl-PLD1 from Hemiscorpius lepturus (Scorpion).